Reading from the N-terminus, the 76-residue chain is Small ribosomal subunit protein bS18 (76 aa).

Belongs to the bacterial ribosomal protein bS18 family. Part of the 30S ribosomal subunit. Forms a tight heterodimer with protein bS6.

Its function is as follows. Binds as a heterodimer with protein bS6 to the central domain of the 16S rRNA, where it helps stabilize the platform of the 30S subunit. This is Small ribosomal subunit protein bS18 from Nitrosomonas eutropha (strain DSM 101675 / C91 / Nm57).